Here is a 131-residue protein sequence, read N- to C-terminus: Fumarate reductase subunit C (131 aa).

3 helical membrane-spanning segments follow: residues 30–50 (EGTA…LFAL), 63–83 (FLQN…ALLH), and 109–129 (IIKS…FVAL).

It belongs to the FrdC family. In terms of assembly, part of an enzyme complex containing four subunits: a flavoprotein (FrdA), an iron-sulfur protein (FrdB), and two hydrophobic anchor proteins (FrdC and FrdD).

The protein resides in the cell inner membrane. Its function is as follows. Two distinct, membrane-bound, FAD-containing enzymes are responsible for the catalysis of fumarate and succinate interconversion; fumarate reductase is used in anaerobic growth, and succinate dehydrogenase is used in aerobic growth. Anchors the catalytic components of the fumarate reductase complex to the cell inner membrane, binds quinones. This chain is Fumarate reductase subunit C, found in Shigella boydii serotype 18 (strain CDC 3083-94 / BS512).